The following is a 117-amino-acid chain: Large ribosomal subunit protein eL34 (117 aa).

This sequence belongs to the eukaryotic ribosomal protein eL34 family. Component of the large ribosomal subunit.

The protein resides in the cytoplasm. The protein localises to the cytosol. Its subcellular location is the endoplasmic reticulum. Its function is as follows. Component of the large ribosomal subunit. The ribosome is a large ribonucleoprotein complex responsible for the synthesis of proteins in the cell. This Ictalurus punctatus (Channel catfish) protein is Large ribosomal subunit protein eL34 (rpl34).